Consider the following 170-residue polypeptide: Calcineurin subunit B type 2 (170 aa).

A lipid anchor (N-myristoyl glycine) is attached at Gly2. 4 EF-hand domains span residues 18–46 (DEIK…FTSM), 50–85 (QENP…FSVR), 87–122 (DEEQ…MVGD), and 128–163 (QLQQ…LEIH). Residues Asp63, Asp65, Asp67, Gln69, Glu74, Asp100, Asp102, Asp104, Tyr106, and Glu111 each contribute to the Ca(2+) site. A calcineurin A binding region spans residues 131–136 (QLVDKT). The Ca(2+) site is built by Asp141, Asp143, Asp145, Lys147, and Glu152.

This sequence belongs to the calcineurin regulatory subunit family. As to quaternary structure, forms a complex composed of a calmodulin-dependent catalytic subunit (also known as calcineurin A) and a regulatory Ca(2+)-binding subunit (also known as calcineurin B). There are three catalytic subunits, each encoded by a separate gene (PPP3CA, PPP3CB, and PPP3CC) and two regulatory subunits which are also encoded by separate genes (PPP3R1 and PPP3R2). Interacts with SPATA33 (via PQIIIT motif).

Its subcellular location is the mitochondrion. Functionally, regulatory subunit of calcineurin, a calcium-dependent, calmodulin stimulated protein phosphatase. Confers calcium sensitivity. The chain is Calcineurin subunit B type 2 (PPP3R2) from Bos taurus (Bovine).